We begin with the raw amino-acid sequence, 311 residues long: Putative dihydroorotate dehydrogenase A (fumarate) (311 aa).

Substrate is bound by residues K45, 69 to 73 (NSMGL), and N128. 45-46 (KT) lines the FMN pocket. N128 serves as a coordination point for FMN. C131 acts as the Nucleophile in catalysis. The FMN site is built by K165 and V193. Substrate is bound at residue 194 to 195 (NS). Residues G220, 248-249 (GG), and 270-271 (GT) each bind FMN.

It belongs to the dihydroorotate dehydrogenase family. Type 1 subfamily. In terms of assembly, homodimer. Requires FMN as cofactor.

It localises to the cytoplasm. It catalyses the reaction (S)-dihydroorotate + fumarate = orotate + succinate. The protein operates within pyrimidine metabolism; UMP biosynthesis via de novo pathway. In terms of biological role, catalyzes the conversion of dihydroorotate to orotate with fumarate as the electron acceptor. The sequence is that of Putative dihydroorotate dehydrogenase A (fumarate) (pyrD) from Streptococcus pyogenes serotype M18 (strain MGAS8232).